The following is a 232-amino-acid chain: 7-cyano-7-deazaguanine synthase (232 aa).

8-18 serves as a coordination point for ATP; sequence FSGGQDSTTCL. 4 residues coordinate Zn(2+): C189, C198, C201, and C204.

Belongs to the QueC family. The cofactor is Zn(2+).

It carries out the reaction 7-carboxy-7-deazaguanine + NH4(+) + ATP = 7-cyano-7-deazaguanine + ADP + phosphate + H2O + H(+). The protein operates within purine metabolism; 7-cyano-7-deazaguanine biosynthesis. Catalyzes the ATP-dependent conversion of 7-carboxy-7-deazaguanine (CDG) to 7-cyano-7-deazaguanine (preQ(0)). This Proteus mirabilis (strain HI4320) protein is 7-cyano-7-deazaguanine synthase.